A 450-amino-acid chain; its full sequence is Thiamine biosynthesis regulatory protein (450 aa).

A compositionally biased stretch (basic residues) spans 1–12; it reads MVNSKRQQRSKK. Positions 1-23 are disordered; sequence MVNSKRQQRSKKVASSSKVPPTK. The span at 13-23 shows a compositional bias: low complexity; that stretch reads VASSSKVPPTK. A DNA-binding region (zn(2)-C6 fungal-type) is located at residues 30–57; the sequence is CWACRFKKRRCDENRPICSLCAKHGDNC. A disordered region spans residues 210-234; the sequence is TDQLPSPGHSMSSAEETTTAALSSP.

It is found in the nucleus. Functionally, positive regulator of thiamine biosynthesis. The protein is Thiamine biosynthesis regulatory protein (THI2) of Saccharomyces cerevisiae (strain ATCC 204508 / S288c) (Baker's yeast).